The primary structure comprises 425 residues: Lipoyl synthase, mitochondrial (425 aa).

The transit peptide at 1 to 33 directs the protein to the mitochondrion; the sequence is MAASSTRLRCLYASSSTWKTSPSQSLISLSRRY. The disordered stretch occupies residues 17–55; it reads TWKTSPSQSLISLSRRYATTSSAPPTPSDESSSTLPKRR. Positions 33–51 are enriched in polar residues; the sequence is YATTSSAPPTPSDESSSTL. [4Fe-4S] cluster-binding residues include Cys142, Cys147, Cys153, Cys173, Cys177, Cys180, and Ser388. The region spanning 156-377 is the Radical SAM core domain; that stretch reads GSDKSAATAT…RQRALEMGFL (222 aa).

This sequence belongs to the radical SAM superfamily. Lipoyl synthase family. Requires [4Fe-4S] cluster as cofactor.

Its subcellular location is the mitochondrion. The enzyme catalyses [[Fe-S] cluster scaffold protein carrying a second [4Fe-4S](2+) cluster] + N(6)-octanoyl-L-lysyl-[protein] + 2 oxidized [2Fe-2S]-[ferredoxin] + 2 S-adenosyl-L-methionine + 4 H(+) = [[Fe-S] cluster scaffold protein] + N(6)-[(R)-dihydrolipoyl]-L-lysyl-[protein] + 4 Fe(3+) + 2 hydrogen sulfide + 2 5'-deoxyadenosine + 2 L-methionine + 2 reduced [2Fe-2S]-[ferredoxin]. Its pathway is protein modification; protein lipoylation via endogenous pathway; protein N(6)-(lipoyl)lysine from octanoyl-[acyl-carrier-protein]: step 2/2. Its function is as follows. Catalyzes the radical-mediated insertion of two sulfur atoms into the C-6 and C-8 positions of the octanoyl moiety bound to the lipoyl domains of lipoate-dependent enzymes, thereby converting the octanoylated domains into lipoylated derivatives. The polypeptide is Lipoyl synthase, mitochondrial (Talaromyces marneffei (strain ATCC 18224 / CBS 334.59 / QM 7333) (Penicillium marneffei)).